Consider the following 495-residue polypeptide: Glycerol kinase (495 aa).

T13 lines the ADP pocket. ATP is bound by residues T13, T14, and S15. T13 serves as a coordination point for sn-glycerol 3-phosphate. R17 lines the ADP pocket. Positions 83, 84, 135, and 244 each coordinate sn-glycerol 3-phosphate. Residues R83, E84, Y135, D244, and Q245 each coordinate glycerol. ADP contacts are provided by T266 and G309. T266, G309, Q313, and G410 together coordinate ATP. Residues G410 and N414 each coordinate ADP.

The protein belongs to the FGGY kinase family.

It carries out the reaction glycerol + ATP = sn-glycerol 3-phosphate + ADP + H(+). Its pathway is polyol metabolism; glycerol degradation via glycerol kinase pathway; sn-glycerol 3-phosphate from glycerol: step 1/1. With respect to regulation, inhibited by fructose 1,6-bisphosphate (FBP). Its function is as follows. Key enzyme in the regulation of glycerol uptake and metabolism. Catalyzes the phosphorylation of glycerol to yield sn-glycerol 3-phosphate. In Shewanella sediminis (strain HAW-EB3), this protein is Glycerol kinase.